Here is a 351-residue protein sequence, read N- to C-terminus: Ribosomal RNA large subunit methyltransferase M (351 aa).

Residues S183, 216–219 (APGG), D235, D255, and D271 each bind S-adenosyl-L-methionine. The Proton acceptor role is filled by K300.

The protein belongs to the class I-like SAM-binding methyltransferase superfamily. RNA methyltransferase RlmE family. RlmM subfamily. In terms of assembly, monomer.

Its subcellular location is the cytoplasm. The enzyme catalyses cytidine(2498) in 23S rRNA + S-adenosyl-L-methionine = 2'-O-methylcytidine(2498) in 23S rRNA + S-adenosyl-L-homocysteine + H(+). Its function is as follows. Catalyzes the 2'-O-methylation at nucleotide C2498 in 23S rRNA. In Ectopseudomonas mendocina (strain ymp) (Pseudomonas mendocina), this protein is Ribosomal RNA large subunit methyltransferase M.